Here is a 325-residue protein sequence, read N- to C-terminus: Solute carrier family 35 member B1 (325 aa).

A run of 8 helical transmembrane segments spans residues 18–38, 54–74, 88–108, 139–159, 171–191, 213–233, 246–266, and 288–308; these read PVCF…QESI, FALS…KLLI, WLYA…NSAL, YPLA…LFMY, IFGY…LTGV, LWST…WEFL, ILLF…TVVY, and VILF…LVFL. The Di-lysine motif signature appears at 321–325; it reads KKTSH.

The protein belongs to the nucleotide-sugar transporter family. SLC35B subfamily.

It is found in the endoplasmic reticulum membrane. Its function is as follows. Probable sugar transporter. This Gallus gallus (Chicken) protein is Solute carrier family 35 member B1 (SLC35B1).